Here is a 905-residue protein sequence, read N- to C-terminus: DNA mismatch repair protein MutS (905 aa).

The segment at 388-410 (LERPANPEGTYPTDAETSGDTLP) is disordered. 638-645 (GPNMAGKS) is an ATP binding site. A disordered region spans residues 826–847 (RDAARGTNSAPSRQTLPGLDLP). Residues 831-840 (GTNSAPSRQT) are compositionally biased toward polar residues.

Belongs to the DNA mismatch repair MutS family.

Its function is as follows. This protein is involved in the repair of mismatches in DNA. It is possible that it carries out the mismatch recognition step. This protein has a weak ATPase activity. This Nitratidesulfovibrio vulgaris (strain DP4) (Desulfovibrio vulgaris) protein is DNA mismatch repair protein MutS.